Consider the following 407-residue polypeptide: Tryptophan synthase beta chain (407 aa).

Lys-91 carries the post-translational modification N6-(pyridoxal phosphate)lysine.

This sequence belongs to the TrpB family. As to quaternary structure, tetramer of two alpha and two beta chains. It depends on pyridoxal 5'-phosphate as a cofactor.

The enzyme catalyses (1S,2R)-1-C-(indol-3-yl)glycerol 3-phosphate + L-serine = D-glyceraldehyde 3-phosphate + L-tryptophan + H2O. The protein operates within amino-acid biosynthesis; L-tryptophan biosynthesis; L-tryptophan from chorismate: step 5/5. Functionally, the beta subunit is responsible for the synthesis of L-tryptophan from indole and L-serine. The sequence is that of Tryptophan synthase beta chain from Streptococcus pneumoniae (strain 70585).